A 538-amino-acid chain; its full sequence is Thiamine transport system permease protein ThiP (538 aa).

The next 12 helical transmembrane spans lie at 19 to 39, 57 to 77, 97 to 117, 141 to 161, 202 to 222, 242 to 262, 293 to 313, 337 to 357, 376 to 396, 406 to 426, 466 to 486, and 509 to 529; these read VVVI…IFAL, LILF…FFGL, LMSL…IGIY, LSGI…QLFL, FSLI…LGGG, LPKA…LFSL, ILVL…ILIS, LSIA…LLLL, AGMV…FLLL, LFII…LRIL, YAFA…ALFG, and AAVT…FIHT. The ABC transmembrane type-1 1 domain occupies 58-263; that stretch reads ILFSFGQALL…VFCLILFSLT (206 aa). One can recognise an ABC transmembrane type-1 2 domain in the interval 333-528; that stretch reads LGYSLSIAPL…LCGILFAFIH (196 aa).

The protein belongs to the binding-protein-dependent transport system permease family. CysTW subfamily. As to quaternary structure, the complex is composed of two ATP-binding proteins (ThiQ), two transmembrane proteins (ThiP) and a solute-binding protein (ThiB).

It localises to the cell inner membrane. Its function is as follows. Part of the ABC transporter complex ThiBPQ involved in thiamine import. Probably responsible for the translocation of the substrate across the membrane. The chain is Thiamine transport system permease protein ThiP (thiP) from Haemophilus influenzae (strain ATCC 51907 / DSM 11121 / KW20 / Rd).